We begin with the raw amino-acid sequence, 179 residues long: UPF0398 protein SSU05_0416 (179 aa).

It belongs to the UPF0398 family.

This Streptococcus suis (strain 05ZYH33) protein is UPF0398 protein SSU05_0416.